The following is a 202-amino-acid chain: Outer-membrane lipoprotein LolB (202 aa).

An N-terminal signal peptide occupies residues 1–18 (MFRRTYFWLMLLPLFMVG). Cys-19 is lipidated: N-palmitoyl cysteine. A lipid anchor (S-diacylglycerol cysteine) is attached at Cys-19.

It belongs to the LolB family. As to quaternary structure, monomer.

It is found in the cell outer membrane. Its function is as follows. Plays a critical role in the incorporation of lipoproteins in the outer membrane after they are released by the LolA protein. The sequence is that of Outer-membrane lipoprotein LolB from Vibrio vulnificus (strain YJ016).